The primary structure comprises 400 residues: Probable transposase for insertion sequence element ISRM3-like (400 aa).

The protein belongs to the transposase mutator family.

Functionally, required for the transposition of the insertion element. The sequence is that of Probable transposase for insertion sequence element ISRM3-like from Sinorhizobium fredii (strain NBRC 101917 / NGR234).